A 502-amino-acid chain; its full sequence is Protein O-glucosyltransferase 2 (502 aa).

Positions Met-1 to Ala-19 are cleaved as a signal peptide. The stretch at Glu-24–Gly-130 is one Filamin repeat. N-linked (GlcNAc...) asparagine glycans are attached at residues Asn-302 and Asn-414. The Prevents secretion from ER signature appears at Lys-499–Leu-502.

Belongs to the KDELC family. In terms of processing, N-glycosylated.

The protein localises to the endoplasmic reticulum lumen. It carries out the reaction L-seryl-[EGF-like domain protein] + UDP-alpha-D-glucose = 3-O-(beta-D-glucosyl)-L-seryl-[EGF-like domain protein] + UDP + H(+). The catalysed reaction is L-seryl-[EGF-like domain protein] + UDP-alpha-D-xylose = 3-O-(beta-D-xylosyl)-L-seryl-[EGF-like domain protein] + UDP + H(+). The protein operates within protein modification; protein glycosylation. Its function is as follows. Protein glucosyltransferase that catalyzes the transfer of glucose from UDP-glucose to a serine residue within the consensus sequence peptide C-X-N-T-X-G-S-F-X-C. Can also catalyze the transfer of xylose from UDP-xylose but less efficiently. Specifically targets extracellular EGF repeats of proteins such as NOTCH1, NOTCH3, FBN1, FBN2 and LTBP1. May regulate the transport of NOTCH1 and NOTCH3 to the plasma membrane and thereby the Notch signaling pathway. In Homo sapiens (Human), this protein is Protein O-glucosyltransferase 2.